A 479-amino-acid chain; its full sequence is Protoheme IX farnesyltransferase (479 aa).

The tract at residues 1-207 (MAEQTATTTS…AYIRLTKPRL (207 aa)) is unknown. A run of 4 helical transmembrane segments spans residues 20–40 (LLAGTAMGVYLLVLVGVTTAV), 64–84 (IGWLAVGHRVVAVIIGICAVV), 98–118 (VLITVAVGSFLYPIQAAVGAV), and 128–148 (LSVIHLIGGLSIFLTLAIALA). The segment covering 155–164 (TGDPTETQTT) has biased composition (low complexity). The disordered stretch occupies residues 155–186 (TGDPTETQTTPSKPEPDQDLPPASEYDPDLPA). 9 helical membrane passes run 207-227 (LMWLLCLVASAGMTLGATTTG), 231-251 (PGIALATLGGGVLSIGASGTF), 271-291 (LATDLVPVWNAIAFGILLTVI), 303-322 (AAILGGVAIVFYSVVYTLLL), 324-344 (PNTVQNTVIGGAAGALPALIG), 345-365 (WVAVTGDIGFGGLALATVIFL), 402-422 (HVIWWLALTLVAAGGLATIEA), 423-443 (LGIVYAVASIVFGAVFLYFAI), and 459-479 (HASNAYLGAVLIAIVFDTLVI). Residues 208–476 (MWLLCLVASA…AVLIAIVFDT (269 aa)) are protoheme IX prenyltransferase.

This sequence in the C-terminal section; belongs to the UbiA prenyltransferase family. Protoheme IX farnesyltransferase subfamily.

The protein resides in the cell membrane. The catalysed reaction is heme b + (2E,6E)-farnesyl diphosphate + H2O = Fe(II)-heme o + diphosphate. It functions in the pathway porphyrin-containing compound metabolism; heme O biosynthesis; heme O from protoheme: step 1/1. In terms of biological role, converts heme B (protoheme IX) to heme O by substitution of the vinyl group on carbon 2 of heme B porphyrin ring with a hydroxyethyl farnesyl side group. This Haloquadratum walsbyi (strain DSM 16790 / HBSQ001) protein is Protoheme IX farnesyltransferase (ctaB).